Here is a 131-residue protein sequence, read N- to C-terminus: T3C protein (131 aa).

The sequence is that of T3C protein from Ovis aries (Sheep).